An 847-amino-acid polypeptide reads, in one-letter code: B-cell receptor CD22 (847 aa).

The first 19 residues, Met1–Cys19, serve as a signal peptide directing secretion. The region spanning Asp20–Glu138 is the Ig-like V-type domain. At Asp20 to Arg687 the chain is on the extracellular side. 3 N-linked (GlcNAc...) asparagine glycosylation sites follow: Asn67, Asn101, and Asn112. Arg120 serves as a coordination point for N-acetylneuraminate. Residues Asn135, Asn164, Asn231, Asn295, Asn363, Asn428, Asn445, Asn448, and Asn479 are each glycosylated (N-linked (GlcNAc...) asparagine). Ig-like C2-type domains are found at residues Pro143 to Gln235, Pro242 to Phe324, Pro331 to Gln416, Pro419 to Asn500, Pro505 to Ser582, and Pro593 to Asn676. Cysteines 161 and 219 form a disulfide. Intrachain disulfides connect Cys265-Cys309 and Cys353-Cys396. 2 disulfides stabilise this stretch: Cys442/Cys484 and Cys529/Cys571. Asn574 and Asn634 each carry an N-linked (GlcNAc...) asparagine glycan. A disulfide bridge connects residues Cys616 and Cys659. Residues Val688–Leu708 traverse the membrane as a helical segment. Residues Gln709–His847 lie on the Cytoplasmic side of the membrane. A phosphoserine mark is found at Ser725, Ser726, and Ser729. 2 short sequence motifs (ITIM motif) span residues Ile760–Leu765 and Val794–Leu799. A Phosphotyrosine modification is found at Tyr762. Phosphotyrosine occurs at positions 807, 822, and 842. 2 short sequence motifs (ITIM motif) span residues Ile820–Leu825 and Val840–Leu845.

The protein belongs to the immunoglobulin superfamily. SIGLEC (sialic acid binding Ig-like lectin) family. As to quaternary structure, predominantly monomer of isoform CD22-beta. Also found as heterodimer of isoform CD22-beta and a shorter isoform. Interacts with PTPN6/SHP-1, LYN, SYK, PIK3R1/PIK3R2 and PLCG1 upon phosphorylation. Interacts with GRB2, INPP5D and SHC1 upon phosphorylation. May form a complex with INPP5D/SHIP, GRB2 and SHC1. Phosphorylation of Tyr-762, Tyr-807 and Tyr-822 are involved in binding to SYK, GRB2 and SYK, respectively. Phosphorylation of Tyr-842 is involved in binding to SYK, PLCG2 and PIK3R1/PIK3R2. Post-translationally, phosphorylated on tyrosine residues by LYN.

Its subcellular location is the cell membrane. Most highly expressed siglec (sialic acid-binding immunoglobulin-like lectin) on B-cells that plays a role in various aspects of B-cell biology including differentiation, antigen presentation, and trafficking to bone marrow. Binds to alpha 2,6-linked sialic acid residues of surface molecules such as CD22 itself, CD45 and IgM in a cis configuration. Can also bind to ligands on other cells as an adhesion molecule in a trans configuration. Acts as an inhibitory coreceptor on the surface of B-cells and inhibits B-cell receptor induced signaling, characterized by inhibition of the calcium mobilization and cellular activation. Mechanistically, the immunoreceptor tyrosine-based inhibitory motif domain is phosphorylated by the Src kinase LYN, which in turn leads to the recruitment of the protein tyrosine phosphatase 1/PTPN6, leading to the negative regulation of BCR signaling. If this negative signaling from is of sufficient strength, apoptosis of the B-cell can be induced. In Gorilla gorilla gorilla (Western lowland gorilla), this protein is B-cell receptor CD22.